Consider the following 526-residue polypeptide: Germ cell-less protein-like 2 (526 aa).

Positions 1 to 85 (MGSSSSRVLG…DKQQPLLNTP (85 aa)) are disordered. The Nuclear localization signal signature appears at 49–55 (SHKRKRS). Positions 62-77 (CDPDSHREEHEEEGDK) are enriched in basic and acidic residues. The short motif at 85–91 (PARKKLR) is the Nuclear localization signal element. One can recognise a BTB domain in the interval 108–178 (SDIKICALGE…LYRDDVLIKP (71 aa)).

Interacts with CUL3. As to expression, expressed predominantly in testis.

The protein resides in the nucleus matrix. The protein operates within protein modification; protein ubiquitination. Functionally, possible function in spermatogenesis. Probable substrate-specific adapter of an E3 ubiquitin-protein ligase complex which mediates the ubiquitination and subsequent proteasomal degradation of target proteins. In Homo sapiens (Human), this protein is Germ cell-less protein-like 2.